We begin with the raw amino-acid sequence, 364 residues long: Fructose-bisphosphate aldolase B (364 aa).

Residue Ala2 is modified to N-acetylalanine. Lys13 carries the post-translational modification N6-succinyllysine. At Ser36 the chain carries Phosphoserine. Phosphothreonine is present on Thr39. A beta-D-fructose 1,6-bisphosphate-binding site is contributed by Arg43. The residue at position 89 (Ser89) is a Phosphoserine. Thr119 is subject to Phosphothreonine. Lys121 carries the N6-succinyllysine modification. Ser132 is modified (phosphoserine). Residue Glu188 is the Proton acceptor of the active site. The active-site Schiff-base intermediate with dihydroxyacetone-P is the Lys230. Residues Ser272, Ser276, Ser299, and Ser301 each carry the phosphoserine modification. 272 to 274 (SGG) contacts beta-D-fructose 1,6-bisphosphate. Arg304 is a beta-D-fructose 1,6-bisphosphate binding site. Residue Ser309 is modified to Phosphoserine. An N6-succinyllysine modification is found at Lys317.

Belongs to the class I fructose-bisphosphate aldolase family. In terms of assembly, homotetramer. Interacts with BBS1, BBS2, BBS4 and BBS7. Forms a ternary complex with G6PD and TP53; this interaction is direct.

It is found in the cytoplasm. It localises to the cytosol. The protein resides in the cytoskeleton. Its subcellular location is the microtubule organizing center. The protein localises to the centrosome. It is found in the centriolar satellite. The catalysed reaction is beta-D-fructose 1,6-bisphosphate = D-glyceraldehyde 3-phosphate + dihydroxyacetone phosphate. It carries out the reaction beta-D-fructose 1-phosphate = D-glyceraldehyde + dihydroxyacetone phosphate. It functions in the pathway carbohydrate degradation; glycolysis; D-glyceraldehyde 3-phosphate and glycerone phosphate from D-glucose: step 4/4. The protein operates within carbohydrate biosynthesis; gluconeogenesis. It participates in carbohydrate metabolism; fructose metabolism. Its function is as follows. Catalyzes the aldol cleavage of fructose 1,6-biphosphate to form two triosephosphates dihydroxyacetone phosphate and D-glyceraldehyde 3-phosphate in glycolysis as well as the reverse stereospecific aldol addition reaction in gluconeogenesis. In fructolysis, metabolizes fructose 1-phosphate derived from the phosphorylation of dietary fructose by fructokinase into dihydroxyacetone phosphate and D-glyceraldehyde. Acts as an adapter independently of its enzymatic activity, exerts a tumor suppressor role by stabilizing the ternary complex with G6PD and TP53 to inhibit G6PD activity and keep oxidative pentose phosphate metabolism in check. The protein is Fructose-bisphosphate aldolase B (ALDOB) of Pongo abelii (Sumatran orangutan).